The sequence spans 1320 residues: Mediator of RNA polymerase II transcription subunit 15 (1320 aa).

Residues 235–244 (QQASLNQLTP) show a composition bias toward polar residues. 5 disordered regions span residues 235 to 283 (QQAS…KPQQ), 372 to 398 (KNMM…PQQA), 540 to 688 (QLQQ…QQQT), 702 to 791 (QTQQ…PTEQ), and 1233 to 1270 (DSSS…DSKK). 3 stretches are compositionally biased toward low complexity: residues 245–283 (QQRA…KPQQ), 375–398 (MAQQ…PQQA), and 540–554 (QLQQ…HTQL). Over residues 555–587 (ADSFSQRQFTSPTLAKPSANVSTIAQQQTQPTA) the composition is skewed to polar residues. Composition is skewed to low complexity over residues 588–624 (LSQS…QQQQ), 634–688 (QQQT…QQQT), and 702–780 (QTQQ…PQQT).

This sequence belongs to the Mediator complex subunit 15 family. Component of the Mediator complex.

It localises to the nucleus. Component of the Mediator complex, a coactivator involved in regulated gene transcription of nearly all RNA polymerase II-dependent genes. Mediator functions as a bridge to convey information from gene-specific regulatory proteins to the basal RNA polymerase II transcription machinery. Mediator is recruited to promoters by direct interactions with regulatory proteins and serves as a scaffold for the assembly of a functional preinitiation complex with RNA polymerase II and the general transcription factors. In Eremothecium gossypii (strain ATCC 10895 / CBS 109.51 / FGSC 9923 / NRRL Y-1056) (Yeast), this protein is Mediator of RNA polymerase II transcription subunit 15 (GAL11).